Consider the following 57-residue polypeptide: Large ribosomal subunit protein bL32 (57 aa).

Residues 1–38 form a disordered region; sequence MAVQQNKPTRSKRGMRRSHDALTAVTSLSVDQTSGEKH. The span at 24-33 shows a compositional bias: polar residues; sequence AVTSLSVDQT.

The protein belongs to the bacterial ribosomal protein bL32 family.

The polypeptide is Large ribosomal subunit protein bL32 (Enterobacter sp. (strain 638)).